Here is a 415-residue protein sequence, read N- to C-terminus: Probable G-protein coupled receptor 19 (415 aa).

Residues 1 to 69 lie on the Extracellular side of the membrane; sequence MVFAHRMDND…LNPGEVATAS (69 aa). N-linked (GlcNAc...) asparagine glycans are attached at residues Asn-25 and Asn-52. A helical membrane pass occupies residues 70-90; the sequence is IFFGALWLFSIFGNSLVCLVI. The Cytoplasmic portion of the chain corresponds to 91–102; that stretch reads HRSRRTQSTTNY. The helical transmembrane segment at 103-123 threads the bilayer; sequence FVVSMACADLLISVASTPFVV. Over 124 to 152 the chain is Extracellular; it reads LQFTTGRWTLGSAMCKVVRYFQYLTPGVQ. The cysteines at positions 138 and 210 are disulfide-linked. The chain crosses the membrane as a helical span at residues 153–173; it reads IYVLLSICIDRFYTIVYPLSF. Residues 174–182 lie on the Cytoplasmic side of the membrane; it reads KVSREKAKK. The chain crosses the membrane as a helical span at residues 183 to 203; it reads MIAASWILDAAFVTPVFFFYG. Topologically, residues 204–221 are extracellular; sequence SNWDSHCNYFLPPSWEGT. Residues 222–242 traverse the membrane as a helical segment; the sequence is AYTVIHFLVGFVIPSILIILF. Residues 243–277 lie on the Cytoplasmic side of the membrane; the sequence is YQKVIKYIWRIGTDGRTLRRTMNIVPRTKVKTVKM. The chain crosses the membrane as a helical span at residues 278–298; it reads FLLLNLVFLFSWLPFHVAQLW. The Extracellular segment spans residues 299-309; the sequence is HPHEQDYKKSS. Residues 310-332 form a helical membrane-spanning segment; the sequence is LVFTAVTWVSFSSSASKPTLYSI. Over 333–415 the chain is Cytoplasmic; it reads YNANFRRGMK…INSNPPNTFV (83 aa).

It belongs to the G-protein coupled receptor 1 family. As to expression, strongly expressed in the brain.

It localises to the cell membrane. In terms of biological role, G-protein coupled receptor that plays a role in the regulation of circadian rhythms and energy metabolism. Participates in maintaining proper circadian gene expression in the suprachiasmatic nucleus (SCN), the locus of the master circadian clock in the brain. May function as a coordinator of aging-associated metabolic dysfunction, stress response, DNA integrity management, and eventual senescence. Upon binding to adropin, modulates mitochondrial energy metabolism via the p44/42-PDK4 signaling pathway, influencing pyruvate dehydrogenase activity. In Mus musculus (Mouse), this protein is Probable G-protein coupled receptor 19 (Gpr19).